A 224-amino-acid chain; its full sequence is Protein HLJ1 (224 aa).

The J domain maps to 18 to 87; sequence DKHEFYEILK…RSIYDRIGRD (70 aa). Positions 84 to 93 are enriched in basic and acidic residues; the sequence is IGRDPDDRQM. The disordered stretch occupies residues 84–107; it reads IGRDPDDRQMPSRGAASGFRGSAG. At serine 109 the chain carries Phosphoserine. Residues 173–192 are disordered; sequence NRGGSPFMRQQPRSRQQQQQ. A compositionally biased stretch (low complexity) spans 181-192; it reads RQQPRSRQQQQQ.

In Saccharomyces cerevisiae (strain ATCC 204508 / S288c) (Baker's yeast), this protein is Protein HLJ1 (HLJ1).